The primary structure comprises 246 residues: MEKWTAWEPQGADALRRFQGLLLDRRGRLHCQVLRLREVARRLERLRRRSLAANVAGSSLSAAGALAAIVGLSLSPVTLGASLVASAVGLGVATAGGAVTITSDLSLIFCNSREVRRVQEIAATCQDQMRELLSCLEFFCQWQGRGDRQLLQSGRDASMALYNSVYFIVFFGSRGFLIPRRAEGATKVSQAVLKAKIQKLSESLESCTGALDELSEQLESRVQLCTKAGRGHNLRNSPDLDAALFF.

2 consecutive transmembrane segments (helical) span residues S50 to L72 and G89 to F109. A coiled-coil region spans residues L193–S220.

It belongs to the apolipoprotein L family. In terms of tissue distribution, present at low levels in brain vascular cells (at protein level).

The protein resides in the cell membrane. It localises to the cell junction. The protein localises to the cytoplasmic vesicle. Its subcellular location is the secretory vesicle. Its function is as follows. Is a modulator of endothelial barrier permeability, required for proper organization of endothelial cell-cell junctions and cytoskeleton. It also plays a role in the modulation of secretory autophagy. May affect blood-brain barrier permeability. This Rattus norvegicus (Rat) protein is Apolipoprotein L domain-containing protein 1 (Apold1).